The chain runs to 104 residues: uncharacterized protein (104 aa).

This sequence belongs to the mimivirus L28/L54 family.

This is an uncharacterized protein from Acanthamoeba polyphaga mimivirus (APMV).